The chain runs to 86 residues: Translation machinery-associated protein 10 (86 aa).

Ser28 and Ser79 each carry phosphoserine. Positions 63–86 (NKTRRGSNSQNNERRLSDLQQYHI) are disordered.

Belongs to the STF2 family. As to quaternary structure, associates with ribosomes.

It is found in the cytoplasm. Its subcellular location is the nucleus. May be involved in inhibition of the reverse ATPase reaction of mitochondrial F(1)F(0)-type ATP synthase. In Saccharomyces cerevisiae (strain ATCC 204508 / S288c) (Baker's yeast), this protein is Translation machinery-associated protein 10.